Reading from the N-terminus, the 198-residue chain is Ras-like protein 2 (198 aa).

GTP is bound at residue 18-25 (GDGGVGKS). The Effector region signature appears at 40–48 (YDPTIEDSY). GTP is bound by residues 65-69 (DTAGQ) and 124-127 (NKCD). Position 195 is a cysteine methyl ester (Cys195). Residue Cys195 is the site of S-farnesyl cysteine attachment. The propeptide at 196 to 198 (IVM) is removed in mature form.

Belongs to the small GTPase superfamily. Ras family.

Its subcellular location is the cell membrane. It carries out the reaction GTP + H2O = GDP + phosphate + H(+). Its activity is regulated as follows. Alternates between an inactive form bound to GDP and an active form bound to GTP. Activated by a guanine nucleotide-exchange factor (GEF) and inactivated by a GTPase-activating protein (GAP). The sequence is that of Ras-like protein 2 (RAS2) from Mucor circinelloides f. lusitanicus (Mucor racemosus var. lusitanicus).